The chain runs to 506 residues: Probable alpha-L-arabinofuranosidase B (506 aa).

The first 26 residues, 1 to 26 (MLPQLSIERASVFALGLIATGSLVVA), serve as a signal peptide directing secretion. Positions 27-343 (GPCDIYSAGG…ANIVAAKYAT (317 aa)) are catalytic. 3 disulfide bridges follow: C29–C39, C89–C94, and C184–C185. D227 is a binding site for substrate. The active-site Nucleophile is the E229. N230 provides a ligand contact to substrate. N240 is a glycosylation site (N-linked (GlcNAc...) asparagine). Residue G304 participates in substrate binding. The active-site Proton donor is the D305. The interval 344-506 (ASLTSGPKLT…VSWVISTGFA (163 aa)) is ABD. Residues C409 and C447 are joined by a disulfide bond. H424, N426, F427, D443, H471, L476, and D496 together coordinate substrate.

This sequence belongs to the glycosyl hydrolase 54 family.

It is found in the secreted. It carries out the reaction Hydrolysis of terminal non-reducing alpha-L-arabinofuranoside residues in alpha-L-arabinosides.. It functions in the pathway glycan metabolism; L-arabinan degradation. In terms of biological role, alpha-L-arabinofuranosidase involved in the degradation of arabinoxylan, a major component of plant hemicellulose. Able to hydrolyze 1,5-, 1,3- and 1,2-alpha-linkages not only in L-arabinofuranosyl oligosaccharides, but also in polysaccharides containing terminal non-reducing L-arabinofuranoses in side chains, like L-arabinan, arabinogalactan and arabinoxylan. The sequence is that of Probable alpha-L-arabinofuranosidase B (abfB) from Aspergillus fumigatus (strain ATCC MYA-4609 / CBS 101355 / FGSC A1100 / Af293) (Neosartorya fumigata).